The sequence spans 88 residues: Large ribosomal subunit protein eL34 (88 aa).

It belongs to the eukaryotic ribosomal protein eL34 family.

The chain is Large ribosomal subunit protein eL34 from Saccharolobus solfataricus (strain ATCC 35092 / DSM 1617 / JCM 11322 / P2) (Sulfolobus solfataricus).